We begin with the raw amino-acid sequence, 300 residues long: Protein sprouty homolog 4 (300 aa).

The residue at position 1 (Met-1) is an N-acetylmethionine. Disordered regions lie at residues 1 to 28 (MEPP…SRAP) and 52 to 114 (DYID…RLLD). Low complexity-rich tracts occupy residues 7–21 (QSSV…MVQP) and 92–108 (SFSG…STSS). Ser-126 is subject to Phosphoserine. An SPR domain is found at 167-274 (KCKECASPRT…GYDRLRRPGC (108 aa)).

It belongs to the sprouty family. In terms of assembly, interacts (via C-terminus) with TESK1 (via both C- and N-termini); the interaction inhibits TESK1 kinase activity. Interacts with RAF1. Interacts with CAV1 (via C-terminus). Expressed in the embryo and adult tissues including heart, brain, lung, kidney, and skeletal muscle.

The protein localises to the cytoplasm. It localises to the cell projection. Its subcellular location is the ruffle membrane. Suppresses the insulin receptor and EGFR-transduced MAPK signaling pathway, but does not inhibit MAPK activation by a constitutively active mutant Ras. Probably impairs the formation of GTP-Ras. Inhibits Ras-independent, but not Ras-dependent, activation of RAF1. Represses integrin-mediated cell spreading via inhibition of TESK1-mediated phosphorylation of cofilin. This chain is Protein sprouty homolog 4 (Spry4), found in Mus musculus (Mouse).